Here is a 109-residue protein sequence, read N- to C-terminus: UPF0060 membrane protein ABO_1373 (109 aa).

A run of 4 helical transmembrane segments spans residues 1–21, 33–53, 63–83, and 87–107; these read MLAL…IVGC, PGWV…LLSL, AAYG…VEGV, and PWDF…MFAP.

This sequence belongs to the UPF0060 family.

The protein localises to the cell inner membrane. The polypeptide is UPF0060 membrane protein ABO_1373 (Alcanivorax borkumensis (strain ATCC 700651 / DSM 11573 / NCIMB 13689 / SK2)).